The primary structure comprises 371 residues: Histidinol-phosphate aminotransferase (371 aa).

The residue at position 228 (Lys-228) is an N6-(pyridoxal phosphate)lysine.

This sequence belongs to the class-II pyridoxal-phosphate-dependent aminotransferase family. Histidinol-phosphate aminotransferase subfamily. Requires pyridoxal 5'-phosphate as cofactor.

It carries out the reaction L-histidinol phosphate + 2-oxoglutarate = 3-(imidazol-4-yl)-2-oxopropyl phosphate + L-glutamate. Its pathway is amino-acid biosynthesis; L-histidine biosynthesis; L-histidine from 5-phospho-alpha-D-ribose 1-diphosphate: step 7/9. The protein is Histidinol-phosphate aminotransferase of Methanococcus aeolicus (strain ATCC BAA-1280 / DSM 17508 / OCM 812 / Nankai-3).